Reading from the N-terminus, the 100-residue chain is Putative pterin-4-alpha-carbinolamine dehydratase (100 aa).

Belongs to the pterin-4-alpha-carbinolamine dehydratase family.

The enzyme catalyses (4aS,6R)-4a-hydroxy-L-erythro-5,6,7,8-tetrahydrobiopterin = (6R)-L-erythro-6,7-dihydrobiopterin + H2O. The sequence is that of Putative pterin-4-alpha-carbinolamine dehydratase from Rhodopseudomonas palustris (strain ATCC BAA-98 / CGA009).